Reading from the N-terminus, the 299-residue chain is ATP phosphoribosyltransferase (299 aa).

It belongs to the ATP phosphoribosyltransferase family. Long subfamily. Equilibrium between an active dimeric form, an inactive hexameric form and higher aggregates. Interconversion between the various forms is largely reversible and is influenced by the natural substrates and inhibitors of the enzyme. Requires Mg(2+) as cofactor.

Its subcellular location is the cytoplasm. The catalysed reaction is 1-(5-phospho-beta-D-ribosyl)-ATP + diphosphate = 5-phospho-alpha-D-ribose 1-diphosphate + ATP. It functions in the pathway amino-acid biosynthesis; L-histidine biosynthesis; L-histidine from 5-phospho-alpha-D-ribose 1-diphosphate: step 1/9. Its activity is regulated as follows. Feedback inhibited by histidine. In terms of biological role, catalyzes the condensation of ATP and 5-phosphoribose 1-diphosphate to form N'-(5'-phosphoribosyl)-ATP (PR-ATP). Has a crucial role in the pathway because the rate of histidine biosynthesis seems to be controlled primarily by regulation of HisG enzymatic activity. This chain is ATP phosphoribosyltransferase, found in Buchnera aphidicola subsp. Acyrthosiphon pisum (strain 5A).